The sequence spans 460 residues: Cysteine--tRNA ligase (460 aa).

Cys28 contributes to the Zn(2+) binding site. A 'HIGH' region motif is present at residues 30 to 40; it reads MTVYDYCHLGH. Residues Cys209, His234, and Glu238 each coordinate Zn(2+). The short motif at 266–270 is the 'KMSKS' region element; sequence KMSKS. Lys269 serves as a coordination point for ATP.

It belongs to the class-I aminoacyl-tRNA synthetase family. In terms of assembly, monomer. The cofactor is Zn(2+).

The protein localises to the cytoplasm. It catalyses the reaction tRNA(Cys) + L-cysteine + ATP = L-cysteinyl-tRNA(Cys) + AMP + diphosphate. In Pseudomonas entomophila (strain L48), this protein is Cysteine--tRNA ligase.